A 146-amino-acid polypeptide reads, in one-letter code: Actin-depolymerizing factor 6 (146 aa).

Serine 13 is modified (phosphoserine). The 133-residue stretch at 14–146 (GMGVADESKT…DLEVLRERAN (133 aa)) folds into the ADF-H domain.

The protein belongs to the actin-binding proteins ADF family. Post-translationally, phosphorylated. In terms of tissue distribution, expressed in vascular tissues of all organs.

The protein localises to the cytoplasm. The protein resides in the cytoskeleton. Its function is as follows. Actin-depolymerizing protein. Severs actin filaments (F-actin) and binds to actin monomers. This is Actin-depolymerizing factor 6 (ADF6) from Arabidopsis thaliana (Mouse-ear cress).